The following is a 465-amino-acid chain: ATP synthase subunit beta (465 aa).

152–159 is a binding site for ATP; that stretch reads GGAGVGKT.

It belongs to the ATPase alpha/beta chains family. In terms of assembly, F-type ATPases have 2 components, CF(1) - the catalytic core - and CF(0) - the membrane proton channel. CF(1) has five subunits: alpha(3), beta(3), gamma(1), delta(1), epsilon(1). CF(0) has three main subunits: a(1), b(2) and c(9-12). The alpha and beta chains form an alternating ring which encloses part of the gamma chain. CF(1) is attached to CF(0) by a central stalk formed by the gamma and epsilon chains, while a peripheral stalk is formed by the delta and b chains.

The protein resides in the cell inner membrane. The catalysed reaction is ATP + H2O + 4 H(+)(in) = ADP + phosphate + 5 H(+)(out). In terms of biological role, produces ATP from ADP in the presence of a proton gradient across the membrane. The catalytic sites are hosted primarily by the beta subunits. This chain is ATP synthase subunit beta, found in Campylobacter fetus subsp. fetus (strain 82-40).